The chain runs to 317 residues: Beta-ketoacyl-[acyl-carrier-protein] synthase III (317 aa).

Catalysis depends on residues Cys-112 and His-244. The segment at 245–249 (QANLR) is ACP-binding. Asn-274 is a catalytic residue.

The protein belongs to the thiolase-like superfamily. FabH family. As to quaternary structure, homodimer.

It is found in the cytoplasm. The catalysed reaction is malonyl-[ACP] + acetyl-CoA + H(+) = 3-oxobutanoyl-[ACP] + CO2 + CoA. The protein operates within lipid metabolism; fatty acid biosynthesis. Catalyzes the condensation reaction of fatty acid synthesis by the addition to an acyl acceptor of two carbons from malonyl-ACP. Catalyzes the first condensation reaction which initiates fatty acid synthesis and may therefore play a role in governing the total rate of fatty acid production. Possesses both acetoacetyl-ACP synthase and acetyl transacylase activities. Its substrate specificity determines the biosynthesis of branched-chain and/or straight-chain of fatty acids. The sequence is that of Beta-ketoacyl-[acyl-carrier-protein] synthase III from Salmonella paratyphi B (strain ATCC BAA-1250 / SPB7).